Consider the following 255-residue polypeptide: Expansin-A25 (255 aa).

Positions 1-26 (MEYAILFATSLVITVLAASGFAPAHG) are cleaved as a signal peptide. One can recognise an Expansin-like EG45 domain in the interval 45-160 (GGACGYGNLY…QQVKCWRQGG (116 aa)). In terms of domain architecture, Expansin-like CBD spans 170-249 (FFELVLVSNV…WWSFGMTFTS (80 aa)).

The protein belongs to the expansin family. Expansin A subfamily. Expressed in panicles and flowers.

The protein resides in the secreted. It is found in the cell wall. It localises to the membrane. In terms of biological role, may cause loosening and extension of plant cell walls by disrupting non-covalent bonding between cellulose microfibrils and matrix glucans. No enzymatic activity has been found. May be required for rapid internodal elongation in deepwater rice during submergence. In Oryza sativa subsp. japonica (Rice), this protein is Expansin-A25 (EXPA25).